Here is a 330-residue protein sequence, read N- to C-terminus: DNA-directed RNA polymerase subunit alpha (330 aa).

The segment at 1-236 (MQNSVIEFLK…EQLEAFIDLR (236 aa)) is alpha N-terminal domain (alpha-NTD). Residues 250 to 330 (FDPILLRLVD…NWPPTNILDN (81 aa)) are alpha C-terminal domain (alpha-CTD).

The protein belongs to the RNA polymerase alpha chain family. In terms of assembly, homodimer. The RNAP catalytic core consists of 2 alpha, 1 beta, 1 beta' and 1 omega subunit. When a sigma factor is associated with the core the holoenzyme is formed, which can initiate transcription.

The catalysed reaction is RNA(n) + a ribonucleoside 5'-triphosphate = RNA(n+1) + diphosphate. Its function is as follows. DNA-dependent RNA polymerase catalyzes the transcription of DNA into RNA using the four ribonucleoside triphosphates as substrates. The sequence is that of DNA-directed RNA polymerase subunit alpha from Blochmanniella pennsylvanica (strain BPEN).